The chain runs to 394 residues: Actin-related protein 2-A (394 aa).

ATP-binding positions include 160 to 162 (GDG), 214 to 218 (RMMKE), and 305 to 310 (GGSTMY).

This sequence belongs to the actin family. ARP2 subfamily. In terms of assembly, component of the Arp2/3 complex composed of actr2/arp2, actr3/arp3, arpc1b, arpc2, arpc3, arpc4 and arpc5.

Its subcellular location is the cytoplasm. The protein resides in the cytoskeleton. It localises to the cell projection. It is found in the nucleus. Functionally, ATP-binding component of the Arp2/3 complex, a multiprotein complex that mediates actin polymerization upon stimulation by nucleation-promoting factor (NPF). The Arp2/3 complex mediates the formation of branched actin networks in the cytoplasm, providing the force for cell motility. Seems to contact the pointed end of the daughter actin filament. In addition to its role in the cytoplasmic cytoskeleton, the Arp2/3 complex also promotes actin polymerization in the nucleus, thereby regulating gene transcription and repair of damaged DNA. The Arp2/3 complex promotes homologous recombination (HR) repair in response to DNA damage by promoting nuclear actin polymerization, leading to drive motility of double-strand breaks (DSBs). This is Actin-related protein 2-A (actr2a) from Danio rerio (Zebrafish).